Consider the following 86-residue polypeptide: MSEIKFYLVKGSALFGESHYPEKRKFVKIVRALNEKQAIEYIYSYFGSKNKIKRYNIKIEQISEIKEEEIPDRRIRELAKIDKIIM.

Belongs to the eukaryotic ribosomal protein eL20 family. As to quaternary structure, part of the 50S ribosomal subunit. Binds 23S rRNA.

The protein is Large ribosomal subunit protein eL20 of Saccharolobus islandicus (strain Y.N.15.51 / Yellowstone #2) (Sulfolobus islandicus).